The primary structure comprises 517 residues: UDP-N-acetylmuramyl-tripeptide synthetase (517 aa).

S38 contributes to the UDP-N-acetyl-alpha-D-muramoyl-L-alanyl-D-glutamate binding site. An ATP-binding site is contributed by 116–122 (GTKGKTT). Residues N160, 162–163 (TT), S189, and R197 contribute to the UDP-N-acetyl-alpha-D-muramoyl-L-alanyl-D-glutamate site. At K231 the chain carries N6-carboxylysine.

It belongs to the MurCDEF family. MurE subfamily. In terms of processing, carboxylation is probably crucial for Mg(2+) binding and, consequently, for the gamma-phosphate positioning of ATP.

Its subcellular location is the cytoplasm. It participates in cell wall biogenesis; peptidoglycan biosynthesis. Functionally, catalyzes the addition of an amino acid to the nucleotide precursor UDP-N-acetylmuramoyl-L-alanyl-D-glutamate (UMAG) in the biosynthesis of bacterial cell-wall peptidoglycan. The chain is UDP-N-acetylmuramyl-tripeptide synthetase from Lacticaseibacillus paracasei (strain ATCC 334 / BCRC 17002 / CCUG 31169 / CIP 107868 / KCTC 3260 / NRRL B-441) (Lactobacillus paracasei).